Here is a 64-residue protein sequence, read N- to C-terminus: Alpha-toxin Amm5 (64 aa).

Residues 2–64 (KDGYIIDDLN…VSIKEKGRCN (63 aa)) form the LCN-type CS-alpha/beta domain. Intrachain disulfides connect C12/C63, C16/C36, C22/C46, and C26/C48. N64 bears the Asparagine amide mark.

In terms of tissue distribution, expressed by the venom gland.

The protein resides in the secreted. Alpha toxins bind voltage-independently at site-3 of sodium channels (Nav) and inhibit the inactivation of the activated channels, thereby blocking neuronal transmission. This Androctonus mauritanicus mauritanicus (Scorpion) protein is Alpha-toxin Amm5.